The sequence spans 360 residues: Variable large protein 18 (360 aa).

The N-terminal stretch at 1-26 (MRKRISAIINKLNISIMMMIVVLMIG) is a signal peptide. The N-palmitoyl cysteine moiety is linked to residue cysteine 27. The S-diacylglycerol cysteine moiety is linked to residue cysteine 27.

Belongs to the variable large protein (Vlp) family. Alpha subfamily.

The protein resides in the cell outer membrane. In terms of biological role, the Vlp and Vsp proteins are antigenically distinct proteins, only one vlp or vsp gene is transcriptionally active at any one time. Switching between these genes is a mechanism of host immune response evasion. The protein is Variable large protein 18 of Borrelia hermsii.